A 165-amino-acid chain; its full sequence is uncharacterized protein (165 aa).

This is an uncharacterized protein from Rickettsia conorii (strain ATCC VR-613 / Malish 7).